A 714-amino-acid chain; its full sequence is Developmentally-regulated protein kinase 1 (714 aa).

2 disordered regions span residues 88 to 122 and 174 to 266; these read NNNI…NNFN and CNMI…IINN. Low complexity-rich tracts occupy residues 174–200, 209–227, and 240–266; these read CNMI…NNNN, PSSN…TTSS, and NFNQ…IINN. Residues 334–589 form the Protein kinase domain; that stretch reads FNFYGSLGSG…SCSIRNHKWF (256 aa). Residues 340 to 348 and Lys-363 contribute to the ATP site; that span reads LGSGSFGTA. Asp-457 functions as the Proton acceptor in the catalytic mechanism. Thr-488 is subject to Phosphothreonine.

The protein belongs to the protein kinase superfamily. AGC Ser/Thr protein kinase family.

It catalyses the reaction L-seryl-[protein] + ATP = O-phospho-L-seryl-[protein] + ADP + H(+). The enzyme catalyses L-threonyl-[protein] + ATP = O-phospho-L-threonyl-[protein] + ADP + H(+). In Dictyostelium discoideum (Social amoeba), this protein is Developmentally-regulated protein kinase 1 (pkaD).